The primary structure comprises 297 residues: Syntaxin-4 (297 aa).

Residues 1–12 (MRDRTHELRQGD) are compositionally biased toward basic and acidic residues. A disordered region spans residues 1–21 (MRDRTHELRQGDDSSDEEDKE). Residues 1–275 (MRDRTHELRQ…QKKARKKKVL (275 aa)) lie on the Cytoplasmic side of the membrane. Phosphoserine occurs at positions 14 and 15. Residue Thr-31 is modified to Phosphothreonine. 4 positions are modified to phosphoserine: Ser-36, Ser-117, Ser-208, and Ser-248. The stretch at 43–163 (HKVRTIRQTI…ERIRRQLKIT (121 aa)) forms a coiled coil. The interaction with CENPF stretch occupies residues 154 to 297 (ERIRRQLKIT…AVIIGVTVVG (144 aa)). One can recognise a t-SNARE coiled-coil homology domain in the interval 200–262 (LNEISARHSE…ERGQEHVKTA (63 aa)). Residues 276–296 (IAICVSITVVLLAVIIGVTVV) form a helical; Anchor for type IV membrane protein membrane-spanning segment. A topological domain (extracellular) is located at residue Gly-297.

This sequence belongs to the syntaxin family. In terms of assembly, component of the SNARE complex composed of STX4, SNAP23 and VAMP7 that interacts with SYT7 during lysosomal exocytosis. Found in a complex with VAMP8 and SNAP23. Detected in a complex with SNAP23 and STXBP4. Interacts with VAMP2. Interacts with SNAP23 and SNAPIN. Interacts with LLGL1. Interacts (via C-terminus) with CENPF. Interacts with DOC2B. Interacts with STXBP6. Interacts with STXBP3; excludes interaction with DOC2B and SNAP25. Interacts with STXBP4; excludes interaction with VAMP2. Interacts with STXBP5L. Expressed in neutrophils and neutrophil-differentiated HL-60 cells. Expression in neutrophils increases with differentiation.

It is found in the cell membrane. It localises to the cell projection. The protein localises to the neuron projection. The protein resides in the stereocilium. Functionally, plasma membrane t-SNARE that mediates docking of transport vesicles. Necessary for the translocation of SLC2A4 from intracellular vesicles to the plasma membrane. In neurons, recruited at neurite tips to membrane domains rich in the phospholipid 1-oleoyl-2-palmitoyl-PC (OPPC) which promotes neurite tip surface expression of the dopamine transporter SLC6A3/DAT by facilitating fusion of SLC6A3-containing transport vesicles with the plasma membrane. Together with STXB3 and VAMP2, may also play a role in docking/fusion of intracellular GLUT4-containing vesicles with the cell surface in adipocytes and in docking of synaptic vesicles at presynaptic active zones. Required for normal hearing. The polypeptide is Syntaxin-4 (STX4) (Homo sapiens (Human)).